The primary structure comprises 1515 residues: Metal resistance protein YCF1 (1515 aa).

Topologically, residues 1–32 (MAGNLVSWACKLCRSPEGFGPISFYGDFTQCF) are vacuolar. A helical transmembrane segment spans residues 33 to 53 (IDGVILNLSAIFMITFGIRDL). The Cytoplasmic portion of the chain corresponds to 54–73 (VNLCKKKHSGIKYRRNWIIV). A helical transmembrane segment spans residues 74–94 (SRMALVLLEIAFVSLASLNIS). The Vacuolar portion of the chain corresponds to 95 to 99 (KEEAE). A helical membrane pass occupies residues 100-120 (NFTIVSQYASTMLSLFVALAL). Topologically, residues 121–130 (HWIEYDRSVV) are cytoplasmic. The helical transmembrane segment at 131–151 (ANTVLLFYWLFETFGNFAKLI) threads the bilayer. At 152 to 169 (NILIRHTYEGIWYSGQTG) the chain is on the vacuolar side. A helical transmembrane segment spans residues 170–190 (FILTLFQVITCASILLLEALP). Residues 191–278 (KKPLMPHQHI…QKSNPSLSWA (88 aa)) lie on the Cytoplasmic side of the membrane. Phosphoserine is present on Ser251. Residues 279-299 (ICRTFGSKMLLAAFFKAIHDV) form a helical membrane-spanning segment. The region spanning 287 to 590 (MLLAAFFKAI…IPMVLNSFIE (304 aa)) is the ABC transmembrane type-1 1 domain. At 300 to 345 (LAFTQPQLLRILIKFVTDYNSERQDDHSSLQGFENNHPQKLPIVRG) the chain is on the vacuolar side. Residues 346-366 (FLIAFAMFLVGFTQTSVLHQY) form a helical membrane-spanning segment. The Cytoplasmic portion of the chain corresponds to 367–422 (FLNVFNTGMYIKSALTALIYQKSLVLSNEASGLSSTGDIVNLMSVDVQKLQDLTQW). Residues 423–443 (LNLIWSGPFQIIICLYSLYKL) traverse the membrane as a helical segment. Topologically, residues 444–446 (LGN) are vacuolar. A helical membrane pass occupies residues 447-467 (SMWVGVIILVIMMPLNSFLMR). Over 468–530 (IQKKLQKSQM…NLTKLGCYMA (63 aa)) the chain is Cytoplasmic. A helical transmembrane segment spans residues 531–551 (VTSFQFNIVPFLVSCCTFAVF). The Vacuolar portion of the chain corresponds to 552–572 (VYTEDRALTTDLVFPALTLFN). The chain crosses the membrane as a helical span at residues 573–593 (LLSFPLMIIPMVLNSFIEASV). Topologically, residues 594–943 (SIGRLFTFFT…VKWNIYLEYA (350 aa)) are cytoplasmic. One can recognise an ABC transporter 1 domain in the interval 626–853 (INIGDDATFL…ADSPLWKLLN (228 aa)). Residue 663–670 (GKVGSGKT) coordinates ATP. Phosphoserine occurs at positions 873, 903, and 908. The residue at position 911 (Thr911) is a Phosphothreonine. Ser914 bears the Phosphoserine mark. Residues 944–964 (KACNPKSVCVFILFIVISMFL) traverse the membrane as a helical segment. Residues 951 to 1235 (VCVFILFIVI…IVRMTVEVET (285 aa)) form the ABC transmembrane type-1 2 domain. At 965 to 1001 (SVMGNVWLKHWSEVNSRYGSNPNAARYLAIYFALGIG) the chain is on the vacuolar side. A helical transmembrane segment spans residues 1002-1023 (SALATLIQTIVLWVFCTIHASK). Residues 1024-1066 (YLHNLMTNSVLRAPMTFFETTPIGRILNRFSNDIYKVDALLGR) lie on the Cytoplasmic side of the membrane. Residues 1067–1087 (TFSQFFVNAVKVTFTITVICA) traverse the membrane as a helical segment. Position 1088 (Thr1088) is a topological domain, vacuolar. A helical transmembrane segment spans residues 1089–1109 (TWQFIFIIIPLSVFYIYYQQY). The Cytoplasmic segment spans residues 1110-1180 (YLRTSRELRR…NANRWLAYRL (71 aa)). Residues 1181 to 1201 (ELIGSIIILGAATLSVFRLKQ) traverse the membrane as a helical segment. At 1202-1205 (GTLT) the chain is on the vacuolar side. A helical transmembrane segment spans residues 1206-1226 (AGMVGLSLSYALQITQTLNWI). Residues 1227–1515 (VRMTVEVETN…CMEAGLVNEN (289 aa)) lie on the Cytoplasmic side of the membrane. The region spanning 1272-1507 (IKFNNYSTRY…NKSLFYSLCM (236 aa)) is the ABC transporter 2 domain. 1306 to 1313 (GRTGAGKS) contacts ATP.

The protein belongs to the ABC transporter superfamily. ABCC family. Conjugate transporter (TC 3.A.1.208) subfamily.

It localises to the vacuole membrane. The enzyme catalyses Cd(2+)(in) + ATP + H2O = Cd(2+)(out) + ADP + phosphate + H(+). It catalyses the reaction an S-substituted glutathione(in) + ATP + H2O = an S-substituted glutathione(out) + ADP + phosphate + H(+). Cooperates for the ATP-dependent vacuolar transport of bilirubin and glutathione conjugates. This is Metal resistance protein YCF1 (YCF1) from Saccharomyces cerevisiae (strain ATCC 204508 / S288c) (Baker's yeast).